The chain runs to 173 residues: Alpha-crystallin A chain (173 aa).

Met1 carries the post-translational modification N-acetylmethionine. The segment at 1 to 63 (MDVTIQHPWF…RTVLDSGISE (63 aa)) is required for complex formation with BFSP1 and BFSP2. Gln6 carries the post-translational modification Deamidated glutamine; partial. At Ser45 the chain carries Phosphoserine. Gln50 carries the post-translational modification Deamidated glutamine; partial. Residues 52-162 (LFRTVLDSGI…SHSERAIPVS (111 aa)) enclose the sHSP domain. Residue Lys99 is modified to N6-acetyllysine. His100 is a binding site for Zn(2+). Position 101 is a deamidated asparagine; partial (Asn101). Zn(2+) contacts are provided by Glu102 and His107. Position 122 is a phosphoserine (Ser122). A Deamidated asparagine; partial modification is found at Asn123. A disulfide bridge connects residues Cys131 and Cys142. Position 147 is a deamidated glutamine; partial (Gln147). The disordered stretch occupies residues 147–173 (QSGMDASHSERAIPVSREEKPSSAPSS). Residues 153–167 (SHSERAIPVSREEKP) show a composition bias toward basic and acidic residues. His154 is a binding site for Zn(2+). Ser162 is a glycosylation site (O-linked (GlcNAc) serine).

The protein belongs to the small heat shock protein (HSP20) family. Heteromer composed of three CRYAA and one CRYAB subunits. Inter-subunit bridging via zinc ions enhances stability, which is crucial as there is no protein turn over in the lens. Can also form homodimers and homotetramers (dimers of dimers) which serve as the building blocks of homooligomers. Within homooligomers, the zinc-binding motif is created from residues of 3 different molecules. His-100 and Glu-102 from one molecule are ligands of the zinc ion, and His-107 and His-154 residues from additional molecules complete the site with tetrahedral coordination geometry. Part of a complex required for lens intermediate filament formation composed of BFSP1, BFSP2 and CRYAA. Undergoes age-dependent proteolytical cleavage at the C-terminus.

It localises to the cytoplasm. The protein resides in the nucleus. Its function is as follows. Contributes to the transparency and refractive index of the lens. In its oxidized form (absence of intramolecular disulfide bond), acts as a chaperone, preventing aggregation of various proteins under a wide range of stress conditions. Required for the correct formation of lens intermediate filaments as part of a complex composed of BFSP1, BFSP2 and CRYAA. This Procavia capensis (Rock hyrax) protein is Alpha-crystallin A chain (CRYAA).